The following is a 314-amino-acid chain: UPF0761 membrane protein VIBHAR_00593 (314 aa).

The next 6 membrane-spanning stretches (helical) occupy residues 41-61 (YLAY…LSIL), 104-124 (MTAV…SNID), 143-163 (FSMY…SIAV), 185-205 (FLRW…YFLV), 217-237 (IGAA…AFYI), and 249-269 (ALAA…IVLI).

It belongs to the UPF0761 family.

It is found in the cell inner membrane. The polypeptide is UPF0761 membrane protein VIBHAR_00593 (Vibrio campbellii (strain ATCC BAA-1116)).